The sequence spans 391 residues: Multidrug resistance protein MdtL (391 aa).

Transmembrane regions (helical) follow at residues 4–24 (FLICSFALVLLYPAGIDMYLV), 42–62 (IAFSVYLAGMAAAMLFAGKVA), 69–89 (PVAIPGAALFIIASVFCSLAE), 93–113 (LFLAGRFLQGLGAGCCYVVAF), 131–151 (LLNGITCIIPVLAPVLGHLIM), 158–178 (SLFWTMATMGIAVLMLSLFIL), 203–222 (FFLSRVVITTLSVSVILTFV), 245–265 (ALTAGVSMTVSFSTPFALGIF), 269–289 (TLMITSQVLFLAAGITLAVSP), 293–313 (VSLFGITLICAGFSVGFGVAM), 331–351 (LGIAQVCGSSLWIWLAAVVGI), and 356–376 (MLIGILIACSIVSLLLIMFVA).

Belongs to the major facilitator superfamily. DHA1 family. MdtL (TC 2.A.1.2.22) subfamily.

The protein resides in the cell inner membrane. In terms of biological role, confers resistance to chloramphenicol. In Escherichia coli (strain SMS-3-5 / SECEC), this protein is Multidrug resistance protein MdtL.